The following is a 223-amino-acid chain: Golgi SNAP receptor complex member 1-1 (223 aa).

At 1 to 201 the chain is on the cytoplasmic side; it reads MDVPSSWDAL…AAIKRKKSMD (201 aa). Positions 8–67 form a coiled coil; the sequence is DALRKQARKIEAQLDEQMHSYRRLVSTKALSKSDGNESDLEAGIDLLLRQLQQVNAQMQA. The chain crosses the membrane as a helical; Anchor for type IV membrane protein span at residues 202–222; it reads TIILSLVAAVCTFLIFIYWIT. Lysine 223 is a topological domain (vesicular).

It belongs to the GOSR1 family. As to quaternary structure, component of several multiprotein Golgi SNARE complexes.

Its subcellular location is the golgi apparatus membrane. Functionally, involved in transport from the ER to the Golgi apparatus as well as in intra-Golgi transport. It belongs to a super-family of proteins called t-SNAREs or soluble NSF (N-ethylmaleimide-sensitive factor) attachment protein receptor. In Arabidopsis thaliana (Mouse-ear cress), this protein is Golgi SNAP receptor complex member 1-1 (GOS11).